The chain runs to 768 residues: Ral guanine nucleotide dissociation stimulator-like 1 (768 aa).

The N-terminal Ras-GEF domain occupies 65 to 196; the sequence is KIRTIKAGTL…RAQNLLEQFQ (132 aa). Positions 232-501 constitute a Ras-GEF domain; sequence SEDLVAEQLT…YALSCEIEAA (270 aa). Position 520 is a phosphoserine (Ser-520). Positions 530–623 are disordered; sequence PGSTPTKEQP…PPTCNNNPKI (94 aa). 2 stretches are compositionally biased toward low complexity: residues 541 to 561 and 586 to 596; these read SAAS…SCES and ESSSSCSSIHS. A compositionally biased stretch (polar residues) spans 597–621; it reads MDTNSSGMSSLINPLSSPPTCNNNP. Residues 648–735 form the Ras-associating domain; sequence DTCIIRISVE…FDFILRKKNS (88 aa).

Interacts with Ras.

In terms of biological role, probable guanine nucleotide exchange factor. This is Ral guanine nucleotide dissociation stimulator-like 1 (Rgl1) from Mus musculus (Mouse).